The sequence spans 208 residues: MDYRNFFTGRPTSEICRDLIGRPFYYQAGGEKIGGYIVESEAYLGIYDRAAHSYGGRRSHANEGLWRAGGTIYIYSQRQYVFFDIACQEEGNPQGVLIRAIEPVWGLDQMLKNRGGKDGVLLTNGPAKLMQAMGIKSRNWDLAPLADSPFVIDLTEKKPAKEIVASPRIGIVQADPAWAQAPLRYYVAGNPYVSGMKKRDWADDHGWL.

This sequence belongs to the DNA glycosylase MPG family.

The chain is Putative 3-methyladenine DNA glycosylase from Lactobacillus delbrueckii subsp. bulgaricus (strain ATCC 11842 / DSM 20081 / BCRC 10696 / JCM 1002 / NBRC 13953 / NCIMB 11778 / NCTC 12712 / WDCM 00102 / Lb 14).